The chain runs to 450 residues: Phosphoglucosamine mutase 2 (450 aa).

Ser101 acts as the Phosphoserine intermediate in catalysis. Residues Ser101, Asp245, Asp247, and Asp249 each contribute to the Mg(2+) site. Ser101 is subject to Phosphoserine.

It belongs to the phosphohexose mutase family. Mg(2+) is required as a cofactor. In terms of processing, activated by phosphorylation.

It carries out the reaction alpha-D-glucosamine 1-phosphate = D-glucosamine 6-phosphate. Catalyzes the conversion of glucosamine-6-phosphate to glucosamine-1-phosphate. This is Phosphoglucosamine mutase 2 from Shewanella baltica (strain OS185).